The chain runs to 202 residues: Protein-methionine-sulfoxide reductase heme-binding subunit MsrQ (202 aa).

Transmembrane regions (helical) follow at residues 8–28, 42–62, 75–95, 110–130, 147–167, and 169–189; these read LAVF…AWIF, LGLG…LQKL, LGLW…VFIL, PYII…ITSN, LVYL…RADL, and EWTL…PSIA.

It belongs to the MsrQ family. As to quaternary structure, heterodimer of a catalytic subunit (MsrP) and a heme-binding subunit (MsrQ). Requires FMN as cofactor. It depends on heme b as a cofactor.

Its subcellular location is the cell inner membrane. Its function is as follows. Part of the MsrPQ system that repairs oxidized periplasmic proteins containing methionine sulfoxide residues (Met-O), using respiratory chain electrons. Thus protects these proteins from oxidative-stress damage caused by reactive species of oxygen and chlorine generated by the host defense mechanisms. MsrPQ is essential for the maintenance of envelope integrity under bleach stress, rescuing a wide series of structurally unrelated periplasmic proteins from methionine oxidation. MsrQ provides electrons for reduction to the reductase catalytic subunit MsrP, using the quinone pool of the respiratory chain. The sequence is that of Protein-methionine-sulfoxide reductase heme-binding subunit MsrQ from Pseudomonas aeruginosa (strain ATCC 15692 / DSM 22644 / CIP 104116 / JCM 14847 / LMG 12228 / 1C / PRS 101 / PAO1).